A 282-amino-acid chain; its full sequence is Bifunctional protein FolD (282 aa).

Residues 165–167, S190, and I231 each bind NADP(+); that span reads NRS.

Belongs to the tetrahydrofolate dehydrogenase/cyclohydrolase family. Homodimer.

The enzyme catalyses (6R)-5,10-methylene-5,6,7,8-tetrahydrofolate + NADP(+) = (6R)-5,10-methenyltetrahydrofolate + NADPH. It carries out the reaction (6R)-5,10-methenyltetrahydrofolate + H2O = (6R)-10-formyltetrahydrofolate + H(+). Its pathway is one-carbon metabolism; tetrahydrofolate interconversion. Its function is as follows. Catalyzes the oxidation of 5,10-methylenetetrahydrofolate to 5,10-methenyltetrahydrofolate and then the hydrolysis of 5,10-methenyltetrahydrofolate to 10-formyltetrahydrofolate. The sequence is that of Bifunctional protein FolD from Clostridium botulinum (strain 657 / Type Ba4).